Here is a 398-residue protein sequence, read N- to C-terminus: MGTQKEKKSVFALLKSNSIGGILLMLATALALIMANSPGHYLYSMLITTPVEVRFGPLEIAKPLLLWINDGLMAGFFFLVGLELKREIFEGGLSQRSNIILPAIGALGGMVVPSCIYLAFNYQDPVALRGWAIPAATDIAFALGILSLLGSRVPTSLKILLTTLAIFDDIGAILIIACFYTNDIYLPGLLIALLCMLILFIVNRCKVERTTVYIFIGSIMWIAMLKSGVHATLAGVILAMFIPMYSRKHPGQSPLKNLEHDLQGTATFIILPIFAFANSGINLTNISMDFFTHAVPMGIALGLFIGKPLGIISFLWVGVQLRLTKLPVDLNWSTVTGMSALAGIGFTMSLFVGSLAFDQAITGLIFDERLGIIMGSLFSGLLGYLLLNKTLPGDKHEM.

Transmembrane regions (helical) follow at residues 19–39, 64–84, 99–119, 130–150, 159–179, 182–202, 222–242, 266–286, 299–319, 337–357, and 370–390; these read IGGI…NSPG, LLLW…GLEL, IILP…IYLA, GWAI…SLLG, ILLT…IACF, NDIY…LFIV, IAML…AMFI, ATFI…LTNI, IALG…WVGV, GMSA…SLAF, and LGII…LNKT.

Belongs to the NhaA Na(+)/H(+) (TC 2.A.33) antiporter family.

Its subcellular location is the cell inner membrane. The enzyme catalyses Na(+)(in) + 2 H(+)(out) = Na(+)(out) + 2 H(+)(in). In terms of biological role, na(+)/H(+) antiporter that extrudes sodium in exchange for external protons. The polypeptide is Na(+)/H(+) antiporter NhaA (Desulfotalea psychrophila (strain LSv54 / DSM 12343)).